The primary structure comprises 318 residues: Thymidylate synthase (318 aa).

DUMP is bound by residues R25 and 180–181 (RR). C200 serves as the catalytic Nucleophile. DUMP is bound by residues 220 to 223 (RSGD), N231, and 261 to 263 (HIY). D223 serves as a coordination point for (6R)-5,10-methylene-5,6,7,8-tetrahydrofolate. A317 serves as a coordination point for (6R)-5,10-methylene-5,6,7,8-tetrahydrofolate.

The protein belongs to the thymidylate synthase family. Bacterial-type ThyA subfamily. In terms of assembly, homodimer.

It localises to the cytoplasm. It catalyses the reaction dUMP + (6R)-5,10-methylene-5,6,7,8-tetrahydrofolate = 7,8-dihydrofolate + dTMP. Its pathway is pyrimidine metabolism; dTTP biosynthesis. Its function is as follows. Catalyzes the reductive methylation of 2'-deoxyuridine-5'-monophosphate (dUMP) to 2'-deoxythymidine-5'-monophosphate (dTMP) while utilizing 5,10-methylenetetrahydrofolate (mTHF) as the methyl donor and reductant in the reaction, yielding dihydrofolate (DHF) as a by-product. This enzymatic reaction provides an intracellular de novo source of dTMP, an essential precursor for DNA biosynthesis. This chain is Thymidylate synthase, found in Lactobacillus gasseri (strain ATCC 33323 / DSM 20243 / BCRC 14619 / CIP 102991 / JCM 1131 / KCTC 3163 / NCIMB 11718 / NCTC 13722 / AM63).